We begin with the raw amino-acid sequence, 181 residues long: Oligoribonuclease (181 aa).

Residues 8 to 171 (LIWIDLEMTG…DDIRESVGEL (164 aa)) enclose the Exonuclease domain. Y129 is an active-site residue.

This sequence belongs to the oligoribonuclease family.

The protein resides in the cytoplasm. Functionally, 3'-to-5' exoribonuclease specific for small oligoribonucleotides. The sequence is that of Oligoribonuclease from Serratia proteamaculans (strain 568).